A 325-amino-acid polypeptide reads, in one-letter code: Hydroxymethylglutaryl-CoA lyase, mitochondrial (325 aa).

A mitochondrion-targeting transit peptide spans 1–27 (MATVKKVLPRRLVGLATLRAVSTSSVG). A Pyruvate carboxyltransferase domain is found at 33–300 (VKIVEVGPRD…HTGVNLQKLL (268 aa)). Arg41 provides a ligand contact to substrate. Asp42 contributes to the a divalent metal cation binding site. At Lys48 the chain carries N6-acetyllysine; alternate. At Lys48 the chain carries N6-succinyllysine; alternate. An N6-acetyllysine modification is found at Lys111. 2 positions are modified to N6-acetyllysine; alternate: Lys137 and Lys179. An N6-succinyllysine; alternate mark is found at Lys137 and Lys179. A divalent metal cation is bound by residues His233 and His235. Cys266 is a catalytic residue. Residue Asn275 coordinates a divalent metal cation. The Microbody targeting signal signature appears at 323 to 325 (CKL). An N6-acetyllysine modification is found at Lys324.

It belongs to the HMG-CoA lyase family. Homodimer; disulfide-linked. Can also form homotetramers.

Its subcellular location is the mitochondrion matrix. The protein resides in the peroxisome. The enzyme catalyses (3S)-3-hydroxy-3-methylglutaryl-CoA = acetoacetate + acetyl-CoA. The protein operates within metabolic intermediate metabolism; (S)-3-hydroxy-3-methylglutaryl-CoA degradation; acetoacetate from (S)-3-hydroxy-3-methylglutaryl-CoA: step 1/1. Its function is as follows. Mitochondrial 3-hydroxy-3-methylglutaryl-CoA lyase that catalyzes a cation-dependent cleavage of (S)-3-hydroxy-3-methylglutaryl-CoA into acetyl-CoA and acetoacetate, a key step in ketogenesis. Terminal step in leucine catabolism. Ketone bodies (beta-hydroxybutyrate, acetoacetate and acetone) are essential as an alternative source of energy to glucose, as lipid precursors and as regulators of metabolism. The chain is Hydroxymethylglutaryl-CoA lyase, mitochondrial (HMGCL) from Bos taurus (Bovine).